A 281-amino-acid polypeptide reads, in one-letter code: Nucleotide-binding protein Noc_2797 (281 aa).

8–15 (GVSGSGKS) is a binding site for ATP. 58–61 (DARN) contacts GTP.

Belongs to the RapZ-like family.

Functionally, displays ATPase and GTPase activities. The chain is Nucleotide-binding protein Noc_2797 from Nitrosococcus oceani (strain ATCC 19707 / BCRC 17464 / JCM 30415 / NCIMB 11848 / C-107).